We begin with the raw amino-acid sequence, 26 residues long: Citropin-2.1.3 (26 aa).

As to expression, expressed by the dorsal and submental skin glands.

It localises to the secreted. The chain is Citropin-2.1.3 from Ranoidea citropa (Australian Blue Mountains tree frog).